A 368-amino-acid polypeptide reads, in one-letter code: Large ribosomal subunit protein mL46 (368 aa).

A disordered region spans residues 53 to 81 (TATATTTTTLPPPHPPVTTSTGTHAATST). The span at 69–81 (VTTSTGTHAATST) shows a compositional bias: low complexity.

It belongs to the mitochondrion-specific ribosomal protein mL46 family. In terms of assembly, component of the mitochondrial large ribosomal subunit (mt-LSU). Mature N.crassa 74S mitochondrial ribosomes consist of a small (37S) and a large (54S) subunit. The 37S small subunit contains a 16S ribosomal RNA (16S mt-rRNA) and 32 different proteins. The 54S large subunit contains a 23S rRNA (23S mt-rRNA) and 42 different proteins.

Its subcellular location is the mitochondrion. Component of the mitochondrial ribosome (mitoribosome), a dedicated translation machinery responsible for the synthesis of mitochondrial genome-encoded proteins, including at least some of the essential transmembrane subunits of the mitochondrial respiratory chain. The mitoribosomes are attached to the mitochondrial inner membrane and translation products are cotranslationally integrated into the membrane. This is Large ribosomal subunit protein mL46 (mrpl17) from Neurospora crassa (strain ATCC 24698 / 74-OR23-1A / CBS 708.71 / DSM 1257 / FGSC 987).